The sequence spans 543 residues: Chaperonin GroEL (543 aa).

ATP contacts are provided by residues 29 to 32, 86 to 90, G413, 476 to 478, and D492; these read TLGP, DGTTT, and NAA.

This sequence belongs to the chaperonin (HSP60) family. Forms a cylinder of 14 subunits composed of two heptameric rings stacked back-to-back. Interacts with the co-chaperonin GroES.

The protein resides in the cytoplasm. It carries out the reaction ATP + H2O + a folded polypeptide = ADP + phosphate + an unfolded polypeptide.. In terms of biological role, together with its co-chaperonin GroES, plays an essential role in assisting protein folding. The GroEL-GroES system forms a nano-cage that allows encapsulation of the non-native substrate proteins and provides a physical environment optimized to promote and accelerate protein folding. This Streptococcus pyogenes serotype M49 (strain NZ131) protein is Chaperonin GroEL.